The sequence spans 428 residues: Sporulation kinase C (428 aa).

Transmembrane regions (helical) follow at residues 8-28 (IISIILAMIFIMFWDYLFYFI) and 36-56 (PVDIVYTAVTLVSVWMLAYYI). The region spanning 76 to 147 (LSEEKNRIMD…NTQIQNKASS (72 aa)) is the PAS domain. In terms of domain architecture, PAC spans 148–200 (GMFTAKYVTKNGTIFWGEVHYKLYYDRDDQFTGSLGTMSDITERKEAEDELIE). The 206-residue stretch at 221–426 (GIAHEVRNPL…VFQVVLPLKS (206 aa)) folds into the Histidine kinase domain. At histidine 224 the chain carries Phosphohistidine; by autocatalysis.

Oligomerizes, probably forms homodimers; oligomerization is assisted by FloT. Interacts with FloT. Another study shows only rare colocalization with FloT or FloA membrane assemblies. KinC membrane assemblies are more mobile than FloT membrane assemblies.

It is found in the cell membrane. Its subcellular location is the membrane raft. The catalysed reaction is ATP + protein L-histidine = ADP + protein N-phospho-L-histidine.. Functionally, phosphorylates the sporulation-regulatory protein Spo0A a transcription factor that also controls biofilm formation. Requires FloT and FloA for localization to DRMs and for activity. In Bacillus subtilis (strain 168), this protein is Sporulation kinase C.